The chain runs to 555 residues: 3-oxocholest-4-en-26-oate--CoA ligase (555 aa).

Residues 172–180 (TGGTTGHPK), aspartate 418, arginine 433, and lysine 524 contribute to the ATP site. Positions 525–555 (PDYRWAKDQTGLRPADEVYNNGDGNGAAATG) are disordered. Residues 544-555 (NNGDGNGAAATG) are compositionally biased toward low complexity.

This sequence belongs to the ATP-dependent AMP-binding enzyme family.

The enzyme catalyses (25S)-3-oxocholest-4-en-26-oate + ATP + CoA = (25S)-3-oxocholest-4-en-26-oyl-CoA + AMP + diphosphate. It participates in steroid metabolism; cholesterol metabolism. In terms of biological role, involved in the degradation of the side chains of C-24 branched-chain sterols. Catalyzes the ATP-dependent CoA thioesterification of the sterol 3-oxocholest-4-en-26-oate to yield 3-oxocholest-4-en-26-oyl-CoA. It can also use beta-sitosterol, campesterol and 3beta-hydroxy-5-cholesten-26-oate. This chain is 3-oxocholest-4-en-26-oate--CoA ligase, found in Rhodococcus rhodochrous.